The primary structure comprises 2515 residues: Probable maltase-glucoamylase 2 (2515 aa).

Topologically, residues 1 to 9 (MARKLSVLE) are cytoplasmic. A helical transmembrane segment spans residues 10–30 (VLLIIFCLIVVTIDILLLLLV). Over 31-482 (LEETSDTSFT…DGVWIEMNEV (452 aa)) the chain is Lumenal. Residues 41–88 (PECPEIPQSERIDCTPDQEVTEDICRWQYKCCWSPVADANVPRCFFPW) form the P-type 1 domain. 3 disulfide bridges follow: Cys43–Cys72, Cys54–Cys71, and Cys65–Cys84. The interval 152-865 (SHENINLVDG…MDKQPANFIV (714 aa)) is maltase. An N-linked (GlcNAc...) asparagine glycan is attached at Asn167. Tyr371 bears the Sulfotyrosine mark. Asn421 carries N-linked (GlcNAc...) asparagine glycosylation. Glu478 serves as the catalytic Nucleophile. Glu481 is a catalytic residue. 3 disulfide bridges follow: Cys608-Cys619, Cys916-Cys933, and Cys928-Cys946. N-linked (GlcNAc...) asparagine glycosylation is present at Asn613. Residues 904–950 (WNLPVSDLEKFNCYPDDPTASEESCRQRGCLWEDTSTPGVPTCYYDT) enclose the P-type 2 domain. A glucoamylase region spans residues 1023–1766 (PLNTPPQPVG…GVNTYVTQVS (744 aa)). Residue Tyr1238 is modified to Sulfotyrosine. Asp1375 serves as the catalytic Nucleophile. Glu1378 is a catalytic residue. 3 disordered regions span residues 1816–1901 (TPTK…PITT), 1994–2015 (STTVPDTTAPFPTSTTSASTNA), and 2037–2091 (TVPD…SSTT). The span at 1817 to 1831 (PTKTSTIPMSSHPSP) shows a compositional bias: polar residues. Low complexity predominate over residues 1832–1901 (STTNATSSET…STNATVPITT (70 aa)). Residue Asn2249 is glycosylated (N-linked (GlcNAc...) asparagine).

This sequence belongs to the glycosyl hydrolase 31 family.

The protein localises to the membrane. It catalyses the reaction Hydrolysis of terminal (1-&gt;4)-linked alpha-D-glucose residues successively from non-reducing ends of the chains with release of beta-D-glucose.. The protein is Probable maltase-glucoamylase 2 of Homo sapiens (Human).